We begin with the raw amino-acid sequence, 395 residues long: Elongation factor Tu (395 aa).

In terms of domain architecture, tr-type G spans 10–204 (KPHVNIGTIG…IVDEYIPTPE (195 aa)). The tract at residues 19-26 (GHVDHGKT) is G1. 19 to 26 (GHVDHGKT) lines the GTP pocket. Residue T26 coordinates Mg(2+). Positions 60–64 (GITIN) are G2. The interval 81–84 (DAPG) is G3. GTP contacts are provided by residues 81–85 (DAPGH) and 136–139 (NKAD). The interval 136 to 139 (NKAD) is G4. The tract at residues 174 to 176 (SAL) is G5.

The protein belongs to the TRAFAC class translation factor GTPase superfamily. Classic translation factor GTPase family. EF-Tu/EF-1A subfamily. Monomer.

It is found in the cytoplasm. The catalysed reaction is GTP + H2O = GDP + phosphate + H(+). Functionally, GTP hydrolase that promotes the GTP-dependent binding of aminoacyl-tRNA to the A-site of ribosomes during protein biosynthesis. This Lactococcus lactis subsp. lactis (strain IL1403) (Streptococcus lactis) protein is Elongation factor Tu.